The following is a 611-amino-acid chain: Probable methyltransferase PMT1 (611 aa).

Topologically, residues 1–11 (MRGRSEGGKKK) are cytoplasmic. Residues 12–32 (PVIVLLCVASVVLVFVYLFFG) form a helical; Signal-anchor for type II membrane protein membrane-spanning segment. Residues 33 to 611 (SSNHKAIEYG…LTSESLRDLE (579 aa)) lie on the Lumenal side of the membrane. Residue N345 is glycosylated (N-linked (GlcNAc...) asparagine).

This sequence belongs to the methyltransferase superfamily.

The protein resides in the golgi apparatus membrane. In Arabidopsis thaliana (Mouse-ear cress), this protein is Probable methyltransferase PMT1.